The following is a 229-amino-acid chain: MKKLITANDIRAAHARGEQAMSVVLRASIITPEAREVAELLGFTITECDESVPASTSAQACKSESQRIREAIIAQLPEGQFTESLVAQLMEKVLKEKQSLELGTMQPSFTSVTGKGGVKVIDGSSVKFGRFDGAEPHCVGLTDLVTEQDGSSMAAGFMQWDNAFFPWTLNYDEIDMVLEGELHVRHEGETMIAKAGDVMFIPKGSSIEFGTPTSVRFLYVAWPANWQSV.

Residues 1–100 form a required for interaction with EutM region; that stretch reads MKKLITANDI…EKVLKEKQSL (100 aa).

Belongs to the EutQ cupin-like family. As to quaternary structure, homodimer. Interacts with the N-terminus of EutM; a probably cytoplasm-facing helix (EutM 'Val-49' to 'Gln-64') interacts with N-terminus of EutQ. It depends on Does not need divalent cations. as a cofactor.

Its subcellular location is the bacterial microcompartment. It catalyses the reaction acetate + ATP = acetyl phosphate + ADP. The protein operates within amine and polyamine degradation; ethanolamine degradation. A bidirectional acetate kinase that may drive flux through the ethanolamine (EA) degradation pathway under anoxic conditions found when this bacteria infects the host intestine. It may generate ATP that can be used by other enzymes (EutA and EutT) in the eut pathway. Can use GTP instead of ATP with reduced efficiency. Might be required to correctly target EutE to bacterial microcompartments (BMC). Required for the biogenesis of multiple mobile BMCs per cell. Might serve as an assembly hub for BMC shell proteins. Expression of eutK, eutL, eutM, eutN, eutS (eutSMNLK) in E.coli leads to formation of a single BMC; coexpression of eutQ with eutSMNLK permits E.coli to make cells with more than one mobile BMC, as is usual in vivo. EutS alone also forms BMCs, but in the presence of eutQ both BMCs and protein filaments are formed. Its function is as follows. Expression of the eut operon allows this bacteria to use ethanolamine (EA) as a carbon, nitrogen and energy source. It relies on cobalamin (vitamin B12) both as a cofactor for the ethanolamine ammonia-lyase (EAL) activity and to induce the operon. EA enhances bacterial survival in macrophages in a concentration-dependent manner, suggesting it is an important nutrient during infection. This Salmonella typhimurium (strain LT2 / SGSC1412 / ATCC 700720) protein is Acetate kinase EutQ (eutQ).